We begin with the raw amino-acid sequence, 317 residues long: Acetyl-coenzyme A carboxylase carboxyl transferase subunit alpha (317 aa).

The 255-residue stretch at 39–293 (RLQKKSNDLT…KAVLEKQLHE (255 aa)) folds into the CoA carboxyltransferase C-terminal domain.

Belongs to the AccA family. As to quaternary structure, acetyl-CoA carboxylase is a heterohexamer composed of biotin carboxyl carrier protein (AccB), biotin carboxylase (AccC) and two subunits each of ACCase subunit alpha (AccA) and ACCase subunit beta (AccD).

It localises to the cytoplasm. It carries out the reaction N(6)-carboxybiotinyl-L-lysyl-[protein] + acetyl-CoA = N(6)-biotinyl-L-lysyl-[protein] + malonyl-CoA. It functions in the pathway lipid metabolism; malonyl-CoA biosynthesis; malonyl-CoA from acetyl-CoA: step 1/1. In terms of biological role, component of the acetyl coenzyme A carboxylase (ACC) complex. First, biotin carboxylase catalyzes the carboxylation of biotin on its carrier protein (BCCP) and then the CO(2) group is transferred by the carboxyltransferase to acetyl-CoA to form malonyl-CoA. This chain is Acetyl-coenzyme A carboxylase carboxyl transferase subunit alpha, found in Neisseria gonorrhoeae (strain NCCP11945).